The sequence spans 72 residues: Large ribosomal subunit protein bL28 (72 aa).

It belongs to the bacterial ribosomal protein bL28 family.

The protein is Large ribosomal subunit protein bL28 of Pelodictyon phaeoclathratiforme (strain DSM 5477 / BU-1).